Reading from the N-terminus, the 372-residue chain is Aryl-hydrocarbon-interacting protein-like 1 (372 aa).

A PPIase FKBP-type domain is found at 53-145 (RQVDQPMHII…DLDELQKEPQ (93 aa)). TPR repeat units follow at residues 178-211 (VPVL…LRNL), 230-263 (NTLT…HPGI), and 264-297 (VKAY…EPSM). The disordered stretch occupies residues 315–372 (KQEEERLRCRNMLSQGATQPPTEPPAEPHTAPPAELSTGPPAEPPAELPLSPGHSLQH). A compositionally biased stretch (pro residues) spans 335–345 (PTEPPAEPHTA).

As to quaternary structure, interacts with NUB1.

The protein resides in the cytoplasm. It localises to the nucleus. Its function is as follows. May be important in protein trafficking and/or protein folding and stabilization. The sequence is that of Aryl-hydrocarbon-interacting protein-like 1 (AIPL1) from Papio cynocephalus (Yellow baboon).